A 534-amino-acid chain; its full sequence is 2,3-bisphosphoglycerate-independent phosphoglycerate mutase (534 aa).

Positions 15 and 65 each coordinate Mn(2+). Serine 65 functions as the Phosphoserine intermediate in the catalytic mechanism. Substrate-binding positions include histidine 126, 156-157 (RD), arginine 188, arginine 194, 260-263 (RPDR), and lysine 333. Mn(2+) is bound by residues aspartate 400, histidine 404, aspartate 441, histidine 442, and histidine 459.

Belongs to the BPG-independent phosphoglycerate mutase family. As to quaternary structure, monomer. The cofactor is Mn(2+).

The enzyme catalyses (2R)-2-phosphoglycerate = (2R)-3-phosphoglycerate. The protein operates within carbohydrate degradation; glycolysis; pyruvate from D-glyceraldehyde 3-phosphate: step 3/5. Its function is as follows. Catalyzes the interconversion of 2-phosphoglycerate and 3-phosphoglycerate. The chain is 2,3-bisphosphoglycerate-independent phosphoglycerate mutase from Acaryochloris marina (strain MBIC 11017).